The sequence spans 519 residues: GMP synthase [glutamine-hydrolyzing] (519 aa).

A Glutamine amidotransferase type-1 domain is found at 4–201 (AILILDFGSQ…VHDICDAGYD (198 aa)). The active-site Nucleophile is Cys-81. Active-site residues include His-175 and Glu-177. A GMPS ATP-PPase domain is found at 202-394 (WNMPDYVEEA…LGLPRDLVFR (193 aa)). 229–235 (SGGVDSS) provides a ligand contact to ATP.

Homodimer.

The enzyme catalyses XMP + L-glutamine + ATP + H2O = GMP + L-glutamate + AMP + diphosphate + 2 H(+). The protein operates within purine metabolism; GMP biosynthesis; GMP from XMP (L-Gln route): step 1/1. Catalyzes the synthesis of GMP from XMP. This chain is GMP synthase [glutamine-hydrolyzing], found in Nitrosomonas eutropha (strain DSM 101675 / C91 / Nm57).